Reading from the N-terminus, the 60-residue chain is Large ribosomal subunit protein bL32 (60 aa).

Over residues 1 to 23 the composition is skewed to basic residues; the sequence is MAKHPVPKKKTSKSKRDMRRSHH. The interval 1–26 is disordered; the sequence is MAKHPVPKKKTSKSKRDMRRSHHALT.

Belongs to the bacterial ribosomal protein bL32 family.

The polypeptide is Large ribosomal subunit protein bL32 (Deinococcus deserti (strain DSM 17065 / CIP 109153 / LMG 22923 / VCD115)).